A 754-amino-acid chain; its full sequence is MKVLSFIVAAALLGLTGASSNSSPGLLKSDGVVLGDWESAYQKASSFVAGLTTDQKLALITGSSVNSTNGSFSGLTFLDGDMGLQNFFYVSAFSLSSALAMTWDRDAIYAQAKAVGSEFYNKGIQVVAGPTSQPLGRTPWGGRIVEGFGPDPYLNGLASGLTAKGYIDAGVIPGAKHFLLYEQETNRTGGGGGGGGDSGSAPYSSNADDKTLHETYLWPFYDAVKHGLGAVMCAMTKVNGTLSCQNSDLLMKHLKTELGFPGLVWPDTNGQSSALESAVNGEDYGSSSIWSTSTMETLLSNGSLSEARLDDMAVRNLMGYYYVNLDNGLQPEEQSEDAYVDVRGNHSKLIRENGAKSMALLKNKNALPLRKPRVMSVFGAHAGPVLGGPNTAMDIEGSGPTYQGHLATGTGSAQASLPYLVPPYVALTNRIIEDGTMMRWVLNDTYSSSSTSGLITEGTDSTAVDPSFADYATNSDACLVFLNALSGEGADRTELYNDDQDTMVNTVADNCNNTIVIINTVGPRLMDQWIEHDNVTAVLYGSLLGQESGNSIVDILYGDVNPSGRLIHTIAKNESDYNVKICYTAQCNFTEGVYLDYRYFDAHNVTPRYPFGHGLSYTTFSYSDLNIEKPSTLSKYPTGEKAVGGNSDLWDIVGNVSVKVANTGSLDGAEVPQLYLGFPTAAQQPVRQLRGFERVEIASGKQSQVTFQLRRRDISYWDVPAQQWLVASGDYKVYVGASSRDLKLNGTFTVQTSS.

The N-terminal stretch at 1–20 (MKVLSFIVAAALLGLTGASS) is a signal peptide. Residues Asn-66, Asn-69, and Asn-186 are each glycosylated (N-linked (GlcNAc...) asparagine). The interval 186–206 (NRTGGGGGGGGDSGSAPYSSN) is disordered. A compositionally biased stretch (gly residues) spans 188–198 (TGGGGGGGGDS). Asn-239 carries N-linked (GlcNAc...) asparagine glycosylation. Residue Asp-267 is part of the active site. N-linked (GlcNAc...) asparagine glycosylation is found at Asn-301, Asn-345, Asn-443, Asn-512, Asn-534, Asn-573, Asn-588, Asn-655, and Asn-745.

It belongs to the glycosyl hydrolase 3 family.

It is found in the secreted. It carries out the reaction Hydrolysis of terminal, non-reducing beta-D-glucosyl residues with release of beta-D-glucose.. The protein operates within glycan metabolism; cellulose degradation. In terms of biological role, beta-glucosidases are one of a number of cellulolytic enzymes involved in the degradation of cellulosic biomass. Catalyzes the last step releasing glucose from the inhibitory cellobiose. The polypeptide is Probable beta-glucosidase D (bglD) (Aspergillus niger (strain ATCC MYA-4892 / CBS 513.88 / FGSC A1513)).